The sequence spans 301 residues: Probable alpha-L-glutamate ligase (301 aa).

The region spanning 104–287 (HQLLAAQGID…VAIKIVHHVE (184 aa)) is the ATP-grasp domain. Residues Lys141, 178 to 179 (EF), Asp187, and 211 to 213 (RSN) contribute to the ATP site. Residues Asp248, Glu260, and Asn262 each contribute to the Mg(2+) site. Positions 248, 260, and 262 each coordinate Mn(2+).

It belongs to the RimK family. Requires Mg(2+) as cofactor. It depends on Mn(2+) as a cofactor.

The sequence is that of Probable alpha-L-glutamate ligase from Xylella fastidiosa (strain M12).